An 843-amino-acid chain; its full sequence is Translation initiation factor IF-2 (843 aa).

Disordered regions lie at residues 50–72 (LKSSHKSKAEEPRKITLQRKTTS) and 94–260 (QRSP…TGPV). The span at 96–135 (SPEEIQAEQKREQDERRAAENAARDKVDADVRQRNEEQAR) shows a compositional bias: basic and acidic residues. Low complexity predominate over residues 139 to 173 (TATAAAAPAAKAEPAPAAAAPAPAPVVADAPASED). Basic and acidic residues-rich tracts occupy residues 174 to 203 (AAARAAERKKDETRRNESRTRDDDRRRGEA) and 227 to 236 (TTDEESDGAR). The segment covering 237-250 (RGRGGKGKLKKRNQ) has biased composition (basic residues). Positions 343–516 (SRAPVVTVMG…EVLELTATPT (174 aa)) constitute a tr-type G domain. The segment at 352-359 (GHVDHGKT) is G1. 352–359 (GHVDHGKT) contacts GTP. Residues 377-381 (GITQH) form a G2 region. A G3 region spans residues 398–401 (DTPG). GTP-binding positions include 398 to 402 (DTPGH) and 452 to 455 (NKID). A G4 region spans residues 452-455 (NKID). The G5 stretch occupies residues 488–490 (SAK).

Belongs to the TRAFAC class translation factor GTPase superfamily. Classic translation factor GTPase family. IF-2 subfamily.

The protein localises to the cytoplasm. Functionally, one of the essential components for the initiation of protein synthesis. Protects formylmethionyl-tRNA from spontaneous hydrolysis and promotes its binding to the 30S ribosomal subunits. Also involved in the hydrolysis of GTP during the formation of the 70S ribosomal complex. The protein is Translation initiation factor IF-2 of Pseudomonas putida (strain W619).